Reading from the N-terminus, the 98-residue chain is NADH-ubiquinone oxidoreductase chain 4L (98 aa).

Transmembrane regions (helical) follow at residues 2–22, 29–49, and 61–81; these read PSIS…MLVF, SLLC…LTIM, and ILLL…LVMM.

This sequence belongs to the complex I subunit 4L family. Core subunit of respiratory chain NADH dehydrogenase (Complex I) which is composed of 45 different subunits.

It is found in the mitochondrion inner membrane. It carries out the reaction a ubiquinone + NADH + 5 H(+)(in) = a ubiquinol + NAD(+) + 4 H(+)(out). Core subunit of the mitochondrial membrane respiratory chain NADH dehydrogenase (Complex I) which catalyzes electron transfer from NADH through the respiratory chain, using ubiquinone as an electron acceptor. Part of the enzyme membrane arm which is embedded in the lipid bilayer and involved in proton translocation. The sequence is that of NADH-ubiquinone oxidoreductase chain 4L (MT-ND4L) from Lepilemur seali (Seal's sportive lemur).